The sequence spans 265 residues: Anaphase-promoting complex subunit 9 (265 aa).

The APC/C is composed of at least 13 subunits that stay tightly associated throughout the cell cycle: APC1, APC2, APC4, APC5, APC9, APC11, CDC16, CDC23, CDC26, CDC27, DOC1, MND2 and SWM1.

It is found in the cytoplasm. It localises to the nucleus. Its pathway is protein modification; protein ubiquitination. Component of the anaphase promoting complex/cyclosome (APC/C), a cell cycle-regulated E3 ubiquitin-protein ligase complex that controls progression through mitosis and the G1 phase of the cell cycle. The APC/C is thought to confer substrate specificity and, in the presence of ubiquitin-conjugating E2 enzymes, it catalyzes the formation of protein-ubiquitin conjugates that are subsequently degraded by the 26S proteasome. In early mitosis, the APC/C is activated by CDC20 and targets securin PDS1, the B-type cyclin CLB5, and other anaphase inhibitory proteins for proteolysis, thereby triggering the separation of sister chromatids at the metaphase-to-anaphase transition. In late mitosis and in G1, degradation of CLB5 allows activation of the APC/C by CDH1, which is needed to destroy CDC20 and the B-type cyclin CLB2 to allow exit from mitosis and creating the low CDK state necessary for cytokinesis and for reforming prereplicative complexes in G1 prior to another round of replication. The chain is Anaphase-promoting complex subunit 9 (APC9) from Saccharomyces cerevisiae (strain ATCC 204508 / S288c) (Baker's yeast).